The primary structure comprises 194 residues: FMN-dependent NADH:quinone oxidoreductase (194 aa).

Residues Ser-9, 15-17, and 85-88 each bind FMN; these read SIS and MYNF.

It belongs to the azoreductase type 1 family. In terms of assembly, homodimer. FMN serves as cofactor.

It catalyses the reaction 2 a quinone + NADH + H(+) = 2 a 1,4-benzosemiquinone + NAD(+). The enzyme catalyses N,N-dimethyl-1,4-phenylenediamine + anthranilate + 2 NAD(+) = 2-(4-dimethylaminophenyl)diazenylbenzoate + 2 NADH + 2 H(+). Functionally, quinone reductase that provides resistance to thiol-specific stress caused by electrophilic quinones. Also exhibits azoreductase activity. Catalyzes the reductive cleavage of the azo bond in aromatic azo compounds to the corresponding amines. This Xanthomonas oryzae pv. oryzae (strain KACC10331 / KXO85) protein is FMN-dependent NADH:quinone oxidoreductase.